An 808-amino-acid polypeptide reads, in one-letter code: Protein translocase subunit SecA 2 (808 aa).

ATP is bound by residues Gln-124, 142-146 (GEGKT), and Asp-535.

It belongs to the SecA family. As to quaternary structure, monomer and homodimer. Part of the essential Sec protein translocation apparatus which comprises SecA, SecYEG and auxiliary proteins SecDF. Other proteins may also be involved.

Its subcellular location is the cell membrane. It localises to the cytoplasm. The enzyme catalyses ATP + H2O + cellular proteinSide 1 = ADP + phosphate + cellular proteinSide 2.. Its function is as follows. Part of the Sec protein translocase complex. Interacts with the SecYEG preprotein conducting channel. Has a central role in coupling the hydrolysis of ATP to the transfer of proteins into and across the cell membrane, serving as an ATP-driven molecular motor driving the stepwise translocation of polypeptide chains across the membrane. This chain is Protein translocase subunit SecA 2, found in Mycobacterium bovis (strain BCG / Pasteur 1173P2).